Here is a 722-residue protein sequence, read N- to C-terminus: Peroxisomal bifunctional enzyme (722 aa).

The tract at residues 1–281 is enoyl-CoA hydratase / isomerase; the sequence is MAEYLRLPHS…FAEKSANKWS (281 aa). At A2 the chain carries Blocked amino end (Ala). K38 carries the N6-succinyllysine modification. Position 100 (G100) interacts with substrate. K173 carries the post-translational modification N6-acetyllysine; alternate. An N6-succinyllysine; alternate modification is found at K173. K182 is modified (N6-succinyllysine). N6-acetyllysine; alternate is present on residues K190 and K218. Residues K190 and K218 each carry the N6-succinyllysine; alternate modification. K241 carries the N6-succinyllysine modification. K249 is subject to N6-acetyllysine. Position 253 is an N6-succinyllysine (K253). K275 is modified (N6-acetyllysine; alternate). K275 carries the post-translational modification N6-succinyllysine; alternate. Residues K279, K289, and K330 each carry the N6-succinyllysine modification. The interval 282–571 is 3-hydroxyacyl-CoA dehydrogenase; the sequence is TPSGASWKTA…DMLCEAGRFG (290 aa). N6-acetyllysine occurs at positions 345, 359, and 463. K531 carries the post-translational modification N6-succinyllysine. Phosphothreonine is present on T547. K576 bears the N6-succinyllysine mark. 3 positions are modified to N6-acetyllysine; alternate: K583, K590, and K709. N6-succinyllysine; alternate is present on residues K583, K590, and K709. A Microbody targeting signal motif is present at residues 720 to 722; it reads SKL. The residue at position 721 (K721) is an N6-succinyllysine.

This sequence in the N-terminal section; belongs to the enoyl-CoA hydratase/isomerase family. The protein in the C-terminal section; belongs to the 3-hydroxyacyl-CoA dehydrogenase family. In terms of assembly, monomer. Acetylated, leading to enhanced enzyme activity. Acetylation is enhanced by up to 80% after treatment either with trichostin A (TCA) or with nicotinamide (NAM) with highest increase on Lys-345. Acetylation and enzyme activity increased by about 1.5% on addition of fatty acids.

The protein localises to the peroxisome. It catalyses the reaction a (3S)-3-hydroxyacyl-CoA = a (2E)-enoyl-CoA + H2O. The catalysed reaction is a 4-saturated-(3S)-3-hydroxyacyl-CoA = a (3E)-enoyl-CoA + H2O. It carries out the reaction a (3Z)-enoyl-CoA = a 4-saturated (2E)-enoyl-CoA. The enzyme catalyses a (3E)-enoyl-CoA = a 4-saturated (2E)-enoyl-CoA. It catalyses the reaction a (3S)-3-hydroxyacyl-CoA + NAD(+) = a 3-oxoacyl-CoA + NADH + H(+). The catalysed reaction is (2S,3S)-3-hydroxy-2-methylbutanoyl-CoA = (2E)-2-methylbut-2-enoyl-CoA + H2O. It carries out the reaction (3E,5Z)-tetradecadienoyl-CoA = (2E,5Z)-tetradecadienoyl-CoA. The enzyme catalyses (3E,5Z)-octadienoyl-CoA = (2E,5Z)-octadienoyl-CoA. It catalyses the reaction (3S)-hydroxydecanoyl-CoA + NAD(+) = 3-oxodecanoyl-CoA + NADH + H(+). The catalysed reaction is (3E)-decenoyl-CoA = (2E)-decenoyl-CoA. It carries out the reaction (3Z)-hexenoyl-CoA = (2E)-hexenoyl-CoA. The enzyme catalyses (3E)-hexenoyl-CoA = (2E)-hexenoyl-CoA. It catalyses the reaction (3S)-hydroxydecanoyl-CoA = (2E)-decenoyl-CoA + H2O. The catalysed reaction is (3S)-hydroxyhexanoyl-CoA = (2E)-hexenoyl-CoA + H2O. It carries out the reaction (3S)-hydroxyhexadecanoyl-CoA + NAD(+) = 3-oxohexadecanoyl-CoA + NADH + H(+). The enzyme catalyses (3S)-hydroxyhexadecanoyl-CoA = (2E)-hexadecenoyl-CoA + H2O. It catalyses the reaction (2E)-hexadecenedioyl-CoA + H2O = (3S)-hydroxyhexadecanedioyl-CoA. The catalysed reaction is (3S)-hydroxyhexadecanedioyl-CoA + NAD(+) = 3-oxohexadecanedioyl-CoA + NADH + H(+). The protein operates within lipid metabolism; fatty acid beta-oxidation. Its activity is regulated as follows. Enzyme activity enhanced by acetylation. Its function is as follows. Peroxisomal trifunctional enzyme possessing 2-enoyl-CoA hydratase, 3-hydroxyacyl-CoA dehydrogenase, and delta 3, delta 2-enoyl-CoA isomerase activities. Catalyzes two of the four reactions of the long chain fatty acids peroxisomal beta-oxidation pathway. Can also use branched-chain fatty acids such as 2-methyl-2E-butenoyl-CoA as a substrate, which is hydrated into (2S,3S)-3-hydroxy-2-methylbutanoyl-CoA. Optimal isomerase for 2,5 double bonds into 3,5 form isomerization in a range of enoyl-CoA species. Also able to isomerize both 3-cis and 3-trans double bonds into the 2-trans form in a range of enoyl-CoA species. Regulates the amount of medium-chain dicarboxylic fatty acids which are essential regulators of all fatty acid oxidation pathways. Also involved in the degradation of long-chain dicarboxylic acids through peroxisomal beta-oxidation. This chain is Peroxisomal bifunctional enzyme, found in Rattus norvegicus (Rat).